Here is a 321-residue protein sequence, read N- to C-terminus: Serine protease 52 (321 aa).

An N-terminal signal peptide occupies residues 1 to 27; the sequence is MKRWKDRRTGLLLPLVLLLFGACSSLA. In terms of domain architecture, Peptidase S1 spans 56–287; it reads IVGGKPANIL…YVRWISKQTA (232 aa). A disulfide bridge links C81 with C97. Active-site charge relay system residues include H96 and D142. The N-linked (GlcNAc...) asparagine glycan is linked to N153. Disulfide bonds link C175/C242, C208/C221, and C232/C263. Residue S236 is the Charge relay system of the active site. The helical transmembrane segment at 300-320 threads the bilayer; it reads ACPLVLSCRAILFLYFVMFLL.

This sequence belongs to the peptidase S1 family.

Its subcellular location is the membrane. Its function is as follows. Probable serine protease. In Mus musculus (Mouse), this protein is Serine protease 52 (Prss52).